We begin with the raw amino-acid sequence, 390 residues long: Lipid-A-disaccharide synthase (390 aa).

The protein belongs to the LpxB family.

The catalysed reaction is a lipid X + a UDP-2-N,3-O-bis[(3R)-3-hydroxyacyl]-alpha-D-glucosamine = a lipid A disaccharide + UDP + H(+). The protein operates within bacterial outer membrane biogenesis; LPS lipid A biosynthesis. Condensation of UDP-2,3-diacylglucosamine and 2,3-diacylglucosamine-1-phosphate to form lipid A disaccharide, a precursor of lipid A, a phosphorylated glycolipid that anchors the lipopolysaccharide to the outer membrane of the cell. The sequence is that of Lipid-A-disaccharide synthase from Haemophilus influenzae (strain 86-028NP).